Consider the following 210-residue polypeptide: Large ribosomal subunit protein uL3 (210 aa).

The tract at residues 136–156 (THGTEKAHRSGGSIGNNTEPG) is disordered.

It belongs to the universal ribosomal protein uL3 family. In terms of assembly, part of the 50S ribosomal subunit. Forms a cluster with proteins L14 and L19.

Its function is as follows. One of the primary rRNA binding proteins, it binds directly near the 3'-end of the 23S rRNA, where it nucleates assembly of the 50S subunit. This chain is Large ribosomal subunit protein uL3, found in Solidesulfovibrio magneticus (strain ATCC 700980 / DSM 13731 / RS-1) (Desulfovibrio magneticus).